The following is a 236-amino-acid chain: uncharacterized protein (236 aa).

A helical transmembrane segment spans residues 52–72 (FFPYIALFQIIMLIILLILYF). Residues 183–236 (SDKREHDDEELSFTTEMETITTETETSSTIPHLRSLPIKSESSMETTSEETDEE) are disordered. The segment covering 196–212 (TTEMETITTETETSSTI) has biased composition (low complexity).

It localises to the membrane. This is an uncharacterized protein from Acheta domesticus (House cricket).